We begin with the raw amino-acid sequence, 333 residues long: Ubiquinol oxidase 2, mitochondrial (333 aa).

The helical transmembrane segment at 158-178 (AMMLETVAAVPGMVGGMLLHL) threads the bilayer. Fe cation-binding residues include Glu-162, Glu-201, and His-204. The helical transmembrane segment at 220-240 (LLVLAVQGVFFNAFFVLYILS) threads the bilayer. The Fe cation site is built by Glu-252, Glu-303, and His-306.

The protein belongs to the alternative oxidase family. In terms of assembly, homodimer; disulfide-linked. It depends on Fe cation as a cofactor.

The protein resides in the mitochondrion inner membrane. The enzyme catalyses 2 a ubiquinol + O2 = 2 a ubiquinone + 2 H2O. Its function is as follows. Catalyzes the cyanide-resistant oxidation of ubiquinol and the reduction of molecular oxygen to water, but does not translocate protons and consequently is not linked to oxidative phosphorylation. May increase respiration when the cytochrome respiratory pathway is restricted, or in response to low temperatures. This Glycine max (Soybean) protein is Ubiquinol oxidase 2, mitochondrial (AOX2).